The sequence spans 1202 residues: Phospholipid-transporting ATPase 10 (1202 aa).

Over 1 to 73 (MAGPSRRRRR…STKYTVASFF (73 aa)) the chain is Cytoplasmic. A helical transmembrane segment spans residues 74–95 (PKSLFEQFRRVANFYFLVTGIL). Topologically, residues 96 to 99 (SLTD) are extracellular. A helical membrane pass occupies residues 100–122 (LSPYGAVSALLPLALVISATMVK). At 123–305 (EGIEDWRRKQ…SRIERTMDKI (183 aa)) the chain is on the cytoplasmic side. The chain crosses the membrane as a helical span at residues 306 to 327 (IYLMFGLVFLMSFVGSIIFGVE). Over 328–364 (TREDKVKNGRTERWYLKPDDADIFFDPERAPMAAIYH) the chain is Extracellular. The chain crosses the membrane as a helical span at residues 365–382 (FFTATMLYSYFIPISLYV). The Cytoplasmic segment spans residues 383-920 (SIEIVKVLQS…HGHWCYSRIA (538 aa)). Aspartate 430 serves as the catalytic 4-aspartylphosphate intermediate. Aspartate 865 and aspartate 869 together coordinate Mg(2+). Residues 921-940 (SMICYFFYKNITFGVTVFLY) traverse the membrane as a helical segment. Over 941–954 (EAYTSFSGQPAYND) the chain is Extracellular. Residues 955 to 974 (WFLSLFNVFFSSLPVIALGV) traverse the membrane as a helical segment. Residues 975–1004 (FDQDVSARFCYKFPLLYQEGVQNILFSWKR) are Cytoplasmic-facing. The chain crosses the membrane as a helical span at residues 1005–1027 (IIGWMFNGFISALAIFFLCKESL). Residues 1028-1040 (KHQLFDPDGKTAG) lie on the Extracellular side of the membrane. Residues 1041–1063 (REILGGTMYTCVVWVVNLQMALS) form a helical membrane-spanning segment. Over 1064 to 1069 (ISYFTW) the chain is Cytoplasmic. Residues 1070-1090 (VQHIVIWGSIAFWYIFLMIYG) form a helical membrane-spanning segment. At 1091-1107 (AMTPSFSTDAYMVFLEA) the chain is on the extracellular side. Residues 1108–1132 (LAPAPSYWLTTLFVMIFALIPYFVY) form a helical membrane-spanning segment. Topologically, residues 1133-1202 (KSVQMRFFPK…DQIYKDLVGV (70 aa)) are cytoplasmic.

It belongs to the cation transport ATPase (P-type) (TC 3.A.3) family. Type IV subfamily.

The protein resides in the cell membrane. It carries out the reaction ATP + H2O + phospholipidSide 1 = ADP + phosphate + phospholipidSide 2.. Its function is as follows. Involved in transport of phospholipids. The polypeptide is Phospholipid-transporting ATPase 10 (Arabidopsis thaliana (Mouse-ear cress)).